We begin with the raw amino-acid sequence, 303 residues long: Nitrogenase iron protein (303 aa).

11–18 (GKGGIGKS) serves as a coordination point for ATP. Cys-112 is a [4Fe-4S] cluster binding site. Position 115 is an ADP-ribosylarginine; by dinitrogenase reductase ADP-ribosyltransferase (Arg-115). Cys-147 contacts [4Fe-4S] cluster.

Belongs to the NifH/BchL/ChlL family. Homodimer. [4Fe-4S] cluster is required as a cofactor. The reversible ADP-ribosylation of Arg-115 inactivates the nitrogenase reductase and regulates nitrogenase activity.

The enzyme catalyses N2 + 8 reduced [2Fe-2S]-[ferredoxin] + 16 ATP + 16 H2O = H2 + 8 oxidized [2Fe-2S]-[ferredoxin] + 2 NH4(+) + 16 ADP + 16 phosphate + 6 H(+). In terms of biological role, the key enzymatic reactions in nitrogen fixation are catalyzed by the nitrogenase complex, which has 2 components: the iron protein and the molybdenum-iron protein. This is Nitrogenase iron protein from Wolinella succinogenes (strain ATCC 29543 / DSM 1740 / CCUG 13145 / JCM 31913 / LMG 7466 / NCTC 11488 / FDC 602W) (Vibrio succinogenes).